Consider the following 233-residue polypeptide: Aspartate/glutamate leucyltransferase (233 aa).

Belongs to the R-transferase family. Bpt subfamily.

Its subcellular location is the cytoplasm. It carries out the reaction N-terminal L-glutamyl-[protein] + L-leucyl-tRNA(Leu) = N-terminal L-leucyl-L-glutamyl-[protein] + tRNA(Leu) + H(+). The enzyme catalyses N-terminal L-aspartyl-[protein] + L-leucyl-tRNA(Leu) = N-terminal L-leucyl-L-aspartyl-[protein] + tRNA(Leu) + H(+). In terms of biological role, functions in the N-end rule pathway of protein degradation where it conjugates Leu from its aminoacyl-tRNA to the N-termini of proteins containing an N-terminal aspartate or glutamate. This chain is Aspartate/glutamate leucyltransferase, found in Vibrio parahaemolyticus serotype O3:K6 (strain RIMD 2210633).